Here is a 389-residue protein sequence, read N- to C-terminus: Aminomethyltransferase (389 aa).

Belongs to the GcvT family. As to quaternary structure, the glycine cleavage system is composed of four proteins: P, T, L and H.

The catalysed reaction is N(6)-[(R)-S(8)-aminomethyldihydrolipoyl]-L-lysyl-[protein] + (6S)-5,6,7,8-tetrahydrofolate = N(6)-[(R)-dihydrolipoyl]-L-lysyl-[protein] + (6R)-5,10-methylene-5,6,7,8-tetrahydrofolate + NH4(+). The glycine cleavage system catalyzes the degradation of glycine. The polypeptide is Aminomethyltransferase (Corynebacterium jeikeium (strain K411)).